A 263-amino-acid polypeptide reads, in one-letter code: MNKRAAIQRAKIKMKILLSNDDGVYAQGIHALADALRDLAEIVIVAPDRNRSGASNSLTLEHPLRVSQIAENTYSVQGTPTDCVHFALNELMKDALPDLVLSGINHGANLGDDVLYSGTVAAAMEGHFLGVQSIAFSLAGTTHFASAAHFVRQLVEQHLANPIPTNRLLNVNIPDRPLELIQGIEVTRLGARHHAESMIKQKDPRGHDIYWLGPPGKEQDAGPGTDFHAIERGWVSLTPLQVDLTAHESLRSMDHWLKEKVNG.

Asp21, Asp22, Ser52, and Asn105 together coordinate a divalent metal cation.

Belongs to the SurE nucleotidase family. It depends on a divalent metal cation as a cofactor.

It localises to the cytoplasm. The enzyme catalyses a ribonucleoside 5'-phosphate + H2O = a ribonucleoside + phosphate. Its function is as follows. Nucleotidase that shows phosphatase activity on nucleoside 5'-monophosphates. In Vibrio cholerae serotype O1 (strain ATCC 39541 / Classical Ogawa 395 / O395), this protein is 5'-nucleotidase SurE.